A 787-amino-acid polypeptide reads, in one-letter code: Protein smoothened (787 aa).

The signal sequence occupies residues 1–27 (MAAARPARGPELPLLGLLLLLLLGDPG). Residues 28–233 (RGAASSGNAT…EAEHQDMHSY (206 aa)) are Extracellular-facing. A disordered region spans residues 30–60 (AASSGNATGPGPRSAGGSARRSAAVTGPPPP). An N-linked (GlcNAc...) asparagine glycan is attached at asparagine 35. A compositionally biased stretch (low complexity) spans 38 to 53 (GPGPRSAGGSARRSAA). Disulfide bonds link cysteine 64–cysteine 178, cysteine 70–cysteine 134, cysteine 78–cysteine 127, cysteine 118–cysteine 154, and cysteine 147–cysteine 169. In terms of domain architecture, FZ spans 65 to 181 (GRAAPCEPLR…DRFPEGCTNE (117 aa)). Residue aspartate 95 coordinates cholesterol. N-linked (GlcNAc...) asparagine glycosylation occurs at asparagine 188. Cystine bridges form between cysteine 193–cysteine 213 and cysteine 217–cysteine 295. Residues 234–254 (IAAFGAVTGLCTLFTLATFVA) form a helical membrane-spanning segment. The Cytoplasmic segment spans residues 255–262 (DWRNSNRY). The helical transmembrane segment at 263–283 (PAVILFYVNACFFVGSIGWLA) threads the bilayer. Over 284–314 (QFMDGARREIVCRADGTMRLGEPTSNETLSC) the chain is Extracellular. Asparagine 309 carries N-linked (GlcNAc...) asparagine glycosylation. A disulfide bridge links cysteine 314 with cysteine 390. Residues 315-335 (VIIFVIVYYALMAGVVWFVVL) form a helical membrane-spanning segment. The Cytoplasmic segment spans residues 336-358 (TYAWHTSFKALGTTYQPLSGKTS). Residues 359–379 (YFHLLTWSLPFVLTVAILAVA) form a helical membrane-spanning segment. Residues 380–402 (QVDGDSVSGICFVGYKNYRYRAG) lie on the Extracellular side of the membrane. Residue tyrosine 394 coordinates cholesterol. A helical membrane pass occupies residues 403 to 423 (FVLAPIGLVLIVGGYFLIRGV). The Cytoplasmic portion of the chain corresponds to 424 to 451 (MTLFSIKSNHPGLLSEKAASKINETMLR). The chain crosses the membrane as a helical span at residues 452-472 (LGIFGFLAFGFVLITFSCHFY). Topologically, residues 473-524 (DFFNQAEWERSFRDYVLCQANVTIGLPTKQPIPDCEIKNRPSLLVEKINLFA) are extracellular. Cysteine 490 and cysteine 507 are oxidised to a cystine. A helical transmembrane segment spans residues 525 to 545 (MFGTGIAMSTWVWTKATLLIW). The tract at residues 538–569 (TKATLLIWRRTWCRLTGQSDDEPKRIKKSKMI) is interaction with BBS5 and BBS7. Topologically, residues 546–787 (RRTWCRLTGQ…TELMDADSDF (242 aa)) are cytoplasmic. Phosphoserine is present on residues serine 556, serine 574, and serine 590. Residues 570–653 (AKAFSKRHEL…TPVPPEEQAN (84 aa)) are required for interaction with PRKACA. The interval 581–593 (QNPGQELSFSMHT) is interaction with DLG5. Residue threonine 593 is modified to Phosphothreonine. A phosphoserine mark is found at serine 595 and serine 638. Phosphothreonine occurs at positions 640 and 644. Serine 662 carries the phosphoserine modification. Residues 667–704 (KRLGRKKKRRKRKKEVCPLAPPPELHPPAPAPSTIPRL) form a disordered region. Over residues 668-680 (RLGRKKKRRKRKK) the composition is skewed to basic residues. Over residues 685–699 (LAPPPELHPPAPAPS) the composition is skewed to pro residues.

Belongs to the G-protein coupled receptor Fz/Smo family. In terms of assembly, homodimer. Interacts (via C-terminus) with protein kinase A catalytic subunit PRKACA; interacts with free PRKACA subunits and the interaction leads to sequestration of PRKACA at the membrane, preventing PRKACA-mediated phosphorylation of GLI transcription factors. Interacts with ARRB2. Interacts with KIF7. Interacts with BBS5 and BBS7; the interactions are indicative for the association of SMO with the BBsome complex to facilitate ciliary localization of SMO. Interacts with DLG5 and SDCBP. Interacts with GAS8/DRC4. Post-translationally, phosphorylation by GRK kinases is required for interaction with protein kinase A catalytic subunit PRKACA.

Its subcellular location is the cell membrane. It localises to the cell projection. The protein localises to the cilium. In terms of biological role, g protein-coupled receptor which associates with the patched protein (PTCH) to transduce hedgehog protein signaling. Binding of sonic hedgehog (SHH) to its receptor patched prevents inhibition of smoothened (SMO) by patched. When active, SMO binds to and sequesters protein kinase A catalytic subunit PRKACA at the cell membrane, preventing PRKACA-mediated phosphorylation of GLI transcription factors which releases the GLI proteins from PRKACA-mediated inhibition and allows for transcriptional activation of hedgehog pathway target genes. Required for the accumulation of KIF7, GLI2 and GLI3 in the cilia. Interacts with DLG5 at the ciliary base to induce the accumulation of KIF7 and GLI2 at the ciliary tip for GLI2 activation. This is Protein smoothened (SMO) from Homo sapiens (Human).